The chain runs to 328 residues: Leucine carboxyl methyltransferase 1 (328 aa).

S-adenosyl-L-methionine contacts are provided by residues Arg81, Gly105, Asp128, 175 to 177 (DLN), and Glu201.

This sequence belongs to the methyltransferase superfamily. LCMT family.

It carries out the reaction [phosphatase 2A protein]-C-terminal L-leucine + S-adenosyl-L-methionine = [phosphatase 2A protein]-C-terminal L-leucine methyl ester + S-adenosyl-L-homocysteine. Inhibited by S-adenosyl-L-homocysteine. Functionally, methylates the carboxyl group of the C-terminal leucine residue of protein phosphatase 2A catalytic subunits to form alpha-leucine ester residues. Acts on the two major protein phosphatase 2A catalytic subunits, PPH21 and PPH22. In Saccharomyces cerevisiae (strain ATCC 204508 / S288c) (Baker's yeast), this protein is Leucine carboxyl methyltransferase 1 (PPM1).